A 262-amino-acid chain; its full sequence is ATP synthase subunit a (262 aa).

6 helical membrane-spanning segments follow: residues 32-52, 98-118, 127-147, 153-173, 189-209, and 219-239; these read IAFT…AVFV, LFMF…VLGI, FTIT…VGFW, FFSL…IFPI, LFVA…FVID, and LLVG…EILV.

This sequence belongs to the ATPase A chain family. In terms of assembly, F-type ATPases have 2 components, CF(1) - the catalytic core - and CF(0) - the membrane proton channel. CF(1) has five subunits: alpha(3), beta(3), gamma(1), delta(1), epsilon(1). CF(0) has four main subunits: a, b, b' and c.

The protein resides in the cell inner membrane. Functionally, key component of the proton channel; it plays a direct role in the translocation of protons across the membrane. The sequence is that of ATP synthase subunit a from Erythrobacter litoralis (strain HTCC2594).